The sequence spans 202 residues: Helix-loop-helix protein 10 (202 aa).

2 disordered regions span residues M1–L26 and Q83–D112. The segment covering S17–L26 has biased composition (polar residues). The basic motif stretch occupies residues T121–V134. Positions T121–L172 constitute a bHLH domain. The segment at Q135–L172 is helix-loop-helix motif.

Heterodimer with hlh-2. As to expression, expressed in intestine, neurons in head, body and tail, and in body hypodermis, and vulva. Expressed in neurons in the male-specific genital sensilla (simple sense organs) known as rays.

The protein resides in the nucleus. It localises to the cytoplasm. In terms of biological role, probable transcription factor which binds the E box motif 5'-CA[TC][AG]TG-3'. This Caenorhabditis elegans protein is Helix-loop-helix protein 10.